The primary structure comprises 352 residues: Desmethylxanthohumol 6'-O-methyltransferase (352 aa).

Asp-219 lines the S-adenosyl-L-methionine pocket. His-257 functions as the Proton acceptor in the catalytic mechanism.

Belongs to the class I-like SAM-binding methyltransferase superfamily. Cation-independent O-methyltransferase family. Homodimer. In terms of tissue distribution, highly expressed in lupulin glands. Detected in early-, mid- and late-stage cones.

The protein resides in the cytoplasm. The catalysed reaction is desmethylxanthohumol + S-adenosyl-L-methionine = xanthohumol + S-adenosyl-L-homocysteine + H(+). It carries out the reaction xanthogalenol + S-adenosyl-L-methionine = 4'-O-methylxanthohumol + S-adenosyl-L-homocysteine + H(+). Its pathway is secondary metabolite biosynthesis. With respect to regulation, inhibited by S-adenosyl homocysteine. Functionally, involved in the biosynthesis of prenylated phenolics natural products which contribute to the bitter taste of beer and display broad biological activities. Catalyzes the biosynthesis of xanthohumol. Methylates desmethylxanthohumol and xanthogalenol, but not caffeic acid, prenylflavanones, simple phenols or phenylpropanoids. The polypeptide is Desmethylxanthohumol 6'-O-methyltransferase (Humulus lupulus (European hop)).